The primary structure comprises 110 residues: Large ribosomal subunit protein uL22 (110 aa).

This sequence belongs to the universal ribosomal protein uL22 family. In terms of assembly, part of the 50S ribosomal subunit.

Its function is as follows. This protein binds specifically to 23S rRNA; its binding is stimulated by other ribosomal proteins, e.g. L4, L17, and L20. It is important during the early stages of 50S assembly. It makes multiple contacts with different domains of the 23S rRNA in the assembled 50S subunit and ribosome. In terms of biological role, the globular domain of the protein is located near the polypeptide exit tunnel on the outside of the subunit, while an extended beta-hairpin is found that lines the wall of the exit tunnel in the center of the 70S ribosome. The polypeptide is Large ribosomal subunit protein uL22 (Mannheimia succiniciproducens (strain KCTC 0769BP / MBEL55E)).